A 1563-amino-acid chain; its full sequence is Pentafunctional AROM polypeptide (1563 aa).

The tract at residues 1–382 (MAEPISNPTR…YEPKASVVED (382 aa)) is 3-dehydroquinate synthase. Residues 48-50 (DTN), 82-85 (EYSK), 113-115 (GGV), and aspartate 118 contribute to the NAD(+) site. 7-phospho-2-dehydro-3-deoxy-D-arabino-heptonate is bound at residue arginine 129. 138-139 (TT) provides a ligand contact to NAD(+). The 7-phospho-2-dehydro-3-deoxy-D-arabino-heptonate site is built by aspartate 145 and lysine 151. Lysine 160 contacts NAD(+). Position 161 (asparagine 161) interacts with 7-phospho-2-dehydro-3-deoxy-D-arabino-heptonate. Residues 178-181 (FLNT) and asparagine 189 each bind NAD(+). Zn(2+) is bound at residue glutamate 193. 7-phospho-2-dehydro-3-deoxy-D-arabino-heptonate is bound by residues 193–196 (EVIK) and lysine 248. Glutamate 258 acts as the Proton acceptor; for 3-dehydroquinate synthase activity in catalysis. 7-phospho-2-dehydro-3-deoxy-D-arabino-heptonate-binding positions include 262–266 (RNLLN) and histidine 269. A Zn(2+)-binding site is contributed by histidine 269. Residue histidine 273 is the Proton acceptor; for 3-dehydroquinate synthase activity of the active site. Positions 285 and 354 each coordinate 7-phospho-2-dehydro-3-deoxy-D-arabino-heptonate. A Zn(2+)-binding site is contributed by histidine 285. An EPSP synthase region spans residues 395–834 (VFAGVPKDLN…WDTMSNYFKV (440 aa)). Cysteine 816 serves as the catalytic For EPSP synthase activity. The segment at 857-1051 (PKSIFIIGMR…KKKPHSFFVS (195 aa)) is shikimate kinase. Residue 864-871 (GMRGAGKS) participates in ATP binding. The interval 1052-1265 (LTVPNVSKAL…AAPGQLSAAE (214 aa)) is 3-dehydroquinase. The Proton acceptor; for 3-dehydroquinate dehydratase activity role is filled by histidine 1168. Lysine 1196 functions as the Schiff-base intermediate with substrate; for 3-dehydroquinate dehydratase activity in the catalytic mechanism. The tract at residues 1278-1563 (PRSFHLFGNP…TDAQAAVMGN (286 aa)) is shikimate dehydrogenase.

In the N-terminal section; belongs to the sugar phosphate cyclases superfamily. Dehydroquinate synthase family. It in the 2nd section; belongs to the EPSP synthase family. This sequence in the 3rd section; belongs to the shikimate kinase family. The protein in the 4th section; belongs to the type-I 3-dehydroquinase family. In the C-terminal section; belongs to the shikimate dehydrogenase family. Homodimer. Requires Zn(2+) as cofactor.

The protein localises to the cytoplasm. The enzyme catalyses 7-phospho-2-dehydro-3-deoxy-D-arabino-heptonate = 3-dehydroquinate + phosphate. It carries out the reaction 3-dehydroquinate = 3-dehydroshikimate + H2O. The catalysed reaction is shikimate + NADP(+) = 3-dehydroshikimate + NADPH + H(+). It catalyses the reaction shikimate + ATP = 3-phosphoshikimate + ADP + H(+). The enzyme catalyses 3-phosphoshikimate + phosphoenolpyruvate = 5-O-(1-carboxyvinyl)-3-phosphoshikimate + phosphate. The protein operates within metabolic intermediate biosynthesis; chorismate biosynthesis; chorismate from D-erythrose 4-phosphate and phosphoenolpyruvate: step 2/7. It participates in metabolic intermediate biosynthesis; chorismate biosynthesis; chorismate from D-erythrose 4-phosphate and phosphoenolpyruvate: step 3/7. It functions in the pathway metabolic intermediate biosynthesis; chorismate biosynthesis; chorismate from D-erythrose 4-phosphate and phosphoenolpyruvate: step 4/7. Its pathway is metabolic intermediate biosynthesis; chorismate biosynthesis; chorismate from D-erythrose 4-phosphate and phosphoenolpyruvate: step 5/7. The protein operates within metabolic intermediate biosynthesis; chorismate biosynthesis; chorismate from D-erythrose 4-phosphate and phosphoenolpyruvate: step 6/7. In terms of biological role, the AROM polypeptide catalyzes 5 consecutive enzymatic reactions in prechorismate polyaromatic amino acid biosynthesis. The chain is Pentafunctional AROM polypeptide from Neurospora crassa (strain ATCC 24698 / 74-OR23-1A / CBS 708.71 / DSM 1257 / FGSC 987).